A 244-amino-acid polypeptide reads, in one-letter code: Histone H1, orphon (244 aa).

Positions 1 to 21 (MSDPAPEIEAPVEAAPVASPP) are enriched in low complexity. 2 disordered regions span residues 1-59 (MSDP…PVSE) and 113-244 (QAKG…KKAK). Over residues 35–45 (PKAEKPKSDKP) the composition is skewed to basic and acidic residues. Residues 53–127 (THPPVSEMVV…GASGSFKLPP (75 aa)) form the H15 domain. Low complexity predominate over residues 186–203 (AKPASKKAAAPKPKAAKP). Residues 213–244 (ATKAAAKKPVAKPVAKKPAAKPAKKPAAKKAK) show a composition bias toward basic residues.

This sequence belongs to the histone H1/H5 family.

It localises to the nucleus. It is found in the chromosome. Functionally, histones H1 are necessary for the condensation of nucleosome chains into higher-order structures. This is Histone H1, orphon from Chironomus thummi thummi (Midge).